A 318-amino-acid chain; its full sequence is Ubiquitin-like domain-containing CTD phosphatase 1 (318 aa).

The Ubiquitin-like domain occupies 3 to 81 (LPIIVKWGGQ…IMMMGTREES (79 aa)). Lysine 117 carries the N6-acetyllysine modification. One can recognise an FCP1 homology domain in the interval 133-294 (PREGKKLLVL…VKLTQYLKEI (162 aa)). Positions 143, 145, and 253 each coordinate Mg(2+).

The cofactor is Mg(2+).

It is found in the nucleus. The enzyme catalyses O-phospho-L-seryl-[protein] + H2O = L-seryl-[protein] + phosphate. The catalysed reaction is O-phospho-L-threonyl-[protein] + H2O = L-threonyl-[protein] + phosphate. Dephosphorylates 26S nuclear proteasomes, thereby decreasing their proteolytic activity. Recruited to the 19S regulatory particle of the 26S proteasome through its interaction with 19S component PSMD2/RPN1. Once recruited, dephosphorylates 19S component PSMC2/RPT1 which impairs PSMC2 ATPase activity and disrupts 26S proteasome assembly. Has also been reported to stimulate the proteolytic activity of the 26S proteasome. The sequence is that of Ubiquitin-like domain-containing CTD phosphatase 1 (Ublcp1) from Rattus norvegicus (Rat).